The primary structure comprises 156 residues: ATP synthase subunit b (156 aa).

A helical membrane pass occupies residues 7 to 29 (LIGQSLTFIAFILFCMKYVWPQL).

This sequence belongs to the ATPase B chain family. As to quaternary structure, F-type ATPases have 2 components, F(1) - the catalytic core - and F(0) - the membrane proton channel. F(1) has five subunits: alpha(3), beta(3), gamma(1), delta(1), epsilon(1). F(0) has three main subunits: a(1), b(2) and c(10-14). The alpha and beta chains form an alternating ring which encloses part of the gamma chain. F(1) is attached to F(0) by a central stalk formed by the gamma and epsilon chains, while a peripheral stalk is formed by the delta and b chains.

It localises to the cell inner membrane. Its function is as follows. F(1)F(0) ATP synthase produces ATP from ADP in the presence of a proton or sodium gradient. F-type ATPases consist of two structural domains, F(1) containing the extramembraneous catalytic core and F(0) containing the membrane proton channel, linked together by a central stalk and a peripheral stalk. During catalysis, ATP synthesis in the catalytic domain of F(1) is coupled via a rotary mechanism of the central stalk subunits to proton translocation. In terms of biological role, component of the F(0) channel, it forms part of the peripheral stalk, linking F(1) to F(0). The polypeptide is ATP synthase subunit b (Saccharophagus degradans (strain 2-40 / ATCC 43961 / DSM 17024)).